A 268-amino-acid chain; its full sequence is Nickel import ATP-binding protein NikE (268 aa).

Residues 4–252 form the ABC transporter domain; sequence LNISGLSHHY…SSDAGRVLQN (249 aa). Residue 45–52 participates in ATP binding; sequence GRSGCGKS.

This sequence belongs to the ABC transporter superfamily. Nickel importer (TC 3.A.1.5.3) family. In terms of assembly, the complex is composed of two ATP-binding proteins (NikD and NikE), two transmembrane proteins (NikB and NikC) and a solute-binding protein (NikA).

It localises to the cell inner membrane. It carries out the reaction Ni(2+)(out) + ATP + H2O = Ni(2+)(in) + ADP + phosphate + H(+). Functionally, part of the ABC transporter complex NikABCDE involved in nickel import. Responsible for energy coupling to the transport system. This is Nickel import ATP-binding protein NikE from Escherichia coli (strain K12).